A 104-amino-acid polypeptide reads, in one-letter code: MQKIRRDDEIIVIAGKDKGKRGKVLKVLANNRLVIGGLNLVKRHTKPNPMSGVQGGIVEKEAPLDASNVAIFNGETNKADRVGFKVEDGKKIRVFKSTQKAVDA.

Belongs to the universal ribosomal protein uL24 family. In terms of assembly, part of the 50S ribosomal subunit.

Functionally, one of two assembly initiator proteins, it binds directly to the 5'-end of the 23S rRNA, where it nucleates assembly of the 50S subunit. One of the proteins that surrounds the polypeptide exit tunnel on the outside of the subunit. This Pseudomonas fluorescens (strain SBW25) protein is Large ribosomal subunit protein uL24.